Consider the following 217-residue polypeptide: uncharacterized protein (217 aa).

2 disordered regions span residues M1–T85 and K167–E189. Positions A38 to S48 are enriched in basic and acidic residues. Residues N60–T78 show a composition bias toward low complexity. Basic and acidic residues predominate over residues P172–E189.

This is an uncharacterized protein from Saccharomyces cerevisiae (strain ATCC 204508 / S288c) (Baker's yeast).